Here is a 628-residue protein sequence, read N- to C-terminus: WW domain-containing adapter protein with coiled-coil (628 aa).

Disordered regions lie at residues 1 to 130 (MVMY…DDWS), 152 to 338 (EKPK…PQSP), and 417 to 532 (NQSP…SARS). The span at 37 to 49 (SSDHRHDKMRDST) shows a compositional bias: basic and acidic residues. Positions 74–84 (GKAKSMHLHRV) are enriched in basic residues. The span at 101-121 (NHSAIHSSNSHSSTPSKTSDS) shows a compositional bias: low complexity. Residues 123-156 (YDPADDWSEHISSSGKKYYYNCRTEVSQWEKPKE) enclose the WW domain. Composition is skewed to basic and acidic residues over residues 152–168 (EKPK…KETS) and 176–185 (PKDRDYRREA). Positions 199 to 213 (DTSTMLPQNILSQTS) are enriched in polar residues. Basic and acidic residues predominate over residues 214–227 (RHNDRDYRLPRTDS). Low complexity-rich tracts occupy residues 230-260 (SAAP…TVQP) and 299-331 (SDKS…TVPV). Polar residues predominate over residues 420–446 (PMSLTSDASSPRSYVSPRISTPQTNTV). A compositionally biased stretch (low complexity) spans 467–486 (GSKQGSSAQTASQQSSAADK). Over residues 511 to 532 (PNHNSSTCASSTSAPQNSSARS) the composition is skewed to polar residues. The stretch at 599–625 (QATLREQRILFLRQQIKELEKLKNQNS) forms a coiled coil.

It localises to the nucleus. Functionally, acts as a linker between gene transcription and histone H2B monoubiquitination at 'Lys-120' (H2BK120ub1). Positive regulator of amino acid starvation-induced autophagy. Positively regulates MTOR activity. May negatively regulate the ubiquitin proteasome pathway. This is WW domain-containing adapter protein with coiled-coil (wac) from Xenopus tropicalis (Western clawed frog).